A 207-amino-acid chain; its full sequence is MLKRIVGLPARRCFHRTSFLLGSDFETVHIPNTNHFKDLLIENGKFQEDQATTIVEIMTDAIRGGVNHVSQDLAKREKLTQLSYQQRVDFAKLRDQLLSADRSEFHNIQNEYESVKNDLEKLRNKLREEITKTNAGFKLDLSLEKGRIREESSHHDLQIKEIDTKIEQEVTNMKMQIDSVKTQVMQWLIGVCTGTFALVLAYMRLLT.

A coiled-coil region spans residues 100–136; sequence ADRSEFHNIQNEYESVKNDLEKLRNKLREEITKTNAG. Residues 184–206 form a helical membrane-spanning segment; sequence VMQWLIGVCTGTFALVLAYMRLL.

It belongs to the CCDC90 family.

Its subcellular location is the mitochondrion. The protein localises to the membrane. The sequence is that of Protein FMP32, mitochondrial (FMP32) from Saccharomyces cerevisiae (strain ATCC 204508 / S288c) (Baker's yeast).